Here is a 108-residue protein sequence, read N- to C-terminus: Ferredoxin, plant-type (108 aa).

One can recognise a 2Fe-2S ferredoxin-type domain in the interval 5–96 (FEITVQPGGE…DLCIERYSKP (92 aa)). [2Fe-2S] cluster-binding residues include Cys-40, Cys-45, Cys-48, and Cys-80.

It belongs to the 2Fe2S plant-type ferredoxin family.

It functions in the pathway aromatic compound metabolism; catechol degradation. Ferredoxins are iron-sulfur proteins that transfer electrons in a wide variety of metabolic reactions. The chain is Ferredoxin, plant-type (nahT) from Pseudomonas putida (Arthrobacter siderocapsulatus).